The sequence spans 159 residues: Ribosomal RNA large subunit methyltransferase H (159 aa).

S-adenosyl-L-methionine is bound by residues leucine 76, glycine 107, and 126-131 (LSSLTL).

This sequence belongs to the RNA methyltransferase RlmH family. In terms of assembly, homodimer.

The protein resides in the cytoplasm. The enzyme catalyses pseudouridine(1915) in 23S rRNA + S-adenosyl-L-methionine = N(3)-methylpseudouridine(1915) in 23S rRNA + S-adenosyl-L-homocysteine + H(+). Its function is as follows. Specifically methylates the pseudouridine at position 1915 (m3Psi1915) in 23S rRNA. The chain is Ribosomal RNA large subunit methyltransferase H from Cupriavidus pinatubonensis (strain JMP 134 / LMG 1197) (Cupriavidus necator (strain JMP 134)).